The sequence spans 353 residues: Polycomb group RING finger protein 6 (353 aa).

Positions 1–116 (MDEAETDATE…FSLRLESGRA (116 aa)) are disordered. The segment covering 9-19 (TENKRASEAKR) has biased composition (basic and acidic residues). Residues 23 to 39 (MPPPPPPPPPISPPALI) are compositionally biased toward pro residues. Serine 34 is subject to Phosphoserine. Residues 40–52 (PAPAAGEEGPASL) show a composition bias toward low complexity. The segment covering 69–82 (EPERSLGRLRGRFE) has biased composition (basic and acidic residues). Positions 71-112 (ERSLGRLRGRFEDYDEELEEEEEMEEEEEEEEEMSHFSLRLE) form a coiled coil. Over residues 83–103 (DYDEELEEEEEMEEEEEEEEE) the composition is skewed to acidic residues. Residue serine 118 is modified to Phosphoserine. The RING-type zinc finger occupies 137-176 (CSICKGYLIDATTITECLHTFCKSCIVRHFYYSNRCPKCN). Glycyl lysine isopeptide (Lys-Gly) (interchain with G-Cter in SUMO2) cross-links involve residues lysine 226 and lysine 237.

As to quaternary structure, component of a PRC1-like complex. Interacts with BMI1/PCGF4, RING1 and RNF2. Interacts with KDM5D. Interacts with CBX4, CBX6, CBX7 and CBX8. Phosphorylated during mitosis. In terms of tissue distribution, expressed in ovary, testis, stomach, liver, thymus and kidney (at protein level).

The protein localises to the nucleus. Its function is as follows. Transcriptional repressor. May modulate the levels of histone H3K4Me3 by activating KDM5D histone demethylase. Component of a Polycomb group (PcG) multiprotein PRC1-like complex, a complex class required to maintain the transcriptionally repressive state of many genes, including Hox genes, throughout development. PcG PRC1 complex acts via chromatin remodeling and modification of histones; it mediates monoubiquitination of histone H2A 'Lys-119', rendering chromatin heritably changed in its expressibility. Within the PRC1-like complex, regulates RNF2 ubiquitin ligase activity. The chain is Polycomb group RING finger protein 6 (Pcgf6) from Mus musculus (Mouse).